The chain runs to 211 residues: Redox-sensing transcriptional repressor Rex (211 aa).

Residues 17–56 constitute a DNA-binding region (H-T-H motif); that stretch reads LYYRFVSSLKSKGIDRVNSKAISDALQIDSATIRRDFSYF. 91 to 96 serves as a coordination point for NAD(+); sequence GVGNLG.

This sequence belongs to the transcriptional regulatory Rex family. As to quaternary structure, homodimer.

The protein resides in the cytoplasm. Modulates transcription in response to changes in cellular NADH/NAD(+) redox state. The chain is Redox-sensing transcriptional repressor Rex from Staphylococcus aureus (strain Mu3 / ATCC 700698).